Reading from the N-terminus, the 230-residue chain is MQRGKKYKALKEKVDSTKFFNIDQAVELAKSTSYTKFDGTVEIATKVDYKSLQNIRGTISLPHGNGKKVRVLVFCKGDKQNDAKAAGAEFVGDMDLIEKVAGGWTDFDACVATPDMMKDVGKLGPILGRKGLMPKPKAGTVTTDVAKAVNELKSGRVEYRPDKGGVVHLGVGKVSFDNAKLVENIRTVVQTLMRDKPSDAKGDYLKTFSVSPTMGVGVKVDVKELVNTSI.

Belongs to the universal ribosomal protein uL1 family. Part of the 50S ribosomal subunit.

Binds directly to 23S rRNA. The L1 stalk is quite mobile in the ribosome, and is involved in E site tRNA release. In terms of biological role, protein L1 is also a translational repressor protein, it controls the translation of the L11 operon by binding to its mRNA. In Leptospira borgpetersenii serovar Hardjo-bovis (strain JB197), this protein is Large ribosomal subunit protein uL1.